We begin with the raw amino-acid sequence, 570 residues long: Peptidyl-prolyl cis-trans isomerase CYP63 (570 aa).

A PPIase cyclophilin-type domain is found at 10 to 174; it reads FLDVSIGGDP…SPVKIIDCGE (165 aa). A disordered region spans residues 180 to 570; sequence AHDAAEREKG…GKRGLVSYAD (391 aa). A compositionally biased stretch (basic and acidic residues) spans 203-219; sequence VSDREAKETRKKESNEK. Low complexity-rich tracts occupy residues 229 to 238 and 246 to 259; these read SSDSYSSSSD and EAYSSSSYESSSSS. Positions 262-292 are enriched in basic residues; it reads KHRKRKSTTRHKGRRGERKSKGRSGKKKARP. A compositionally biased stretch (low complexity) spans 297 to 309; it reads STNSSSDTESSSS. Over residues 323 to 339 the composition is skewed to basic and acidic residues; it reads VKVDNADQHANLDDSVK. S340 carries the post-translational modification Phosphoserine. Residues 340 to 351 show a composition bias toward basic residues; that stretch reads SRSRSPIRRRNQ. Over residues 352–365 the composition is skewed to low complexity; it reads NSRSKSPSRSPVRV. Basic and acidic residues-rich tracts occupy residues 387-397 and 437-467; these read SPREKPTEETV and SPPRHWPDRRNFQDRNRDRYPSNRSYSERSP. Residues 468–490 show a composition bias toward basic residues; the sequence is RGRFRSPPRRRSPPRYNRRRRST. Positions 495–505 are enriched in basic and acidic residues; it reads DGYRRRLRDGS. A compositionally biased stretch (basic residues) spans 509-523; that stretch reads SPRHRSRSQSPRKRQ. Residues 546 to 555 show a composition bias toward low complexity; sequence SPAESLSPSH.

This sequence belongs to the cyclophilin-type PPIase family. As to quaternary structure, interacts with SNRNP35, RNU1, SCL28, SCL30, SR30 and SR34. The binding to SR34 is phosphorylation-dependent. Ubiquitous.

The protein localises to the nucleus. The protein resides in the nucleoplasm. It localises to the nucleus speckle. It carries out the reaction [protein]-peptidylproline (omega=180) = [protein]-peptidylproline (omega=0). Its function is as follows. PPIases accelerate the folding of proteins. It catalyzes the cis-trans isomerization of proline imidic peptide bonds in oligopeptides. May be implicated in the folding, transport, and assembly of proteins. Probably involved in early steps of spliceosomal assembly. This chain is Peptidyl-prolyl cis-trans isomerase CYP63 (CYP63), found in Arabidopsis thaliana (Mouse-ear cress).